We begin with the raw amino-acid sequence, 386 residues long: GTPase Obg (386 aa).

The region spanning 1 to 159 is the Obg domain; it reads MKFVDEAVIR…RSLKLELMLL (159 aa). Positions 160-333 constitute an OBG-type G domain; that stretch reads ADVGLLGMPN…LSLKLVDFID (174 aa). GTP-binding positions include 166-173, 191-195, 213-216, 283-286, and 314-316; these read GMPNAGKS, FTTLV, DIPG, NKKD, and SAY. The Mg(2+) site is built by serine 173 and threonine 193. A disordered region spans residues 356-375; that stretch reads KDSDSLNEDFDDSDDDDFDD. The span at 360 to 375 shows a compositional bias: acidic residues; the sequence is SLNEDFDDSDDDDFDD.

Belongs to the TRAFAC class OBG-HflX-like GTPase superfamily. OBG GTPase family. In terms of assembly, monomer. Mg(2+) is required as a cofactor.

It is found in the cytoplasm. An essential GTPase which binds GTP, GDP and possibly (p)ppGpp with moderate affinity, with high nucleotide exchange rates and a fairly low GTP hydrolysis rate. Plays a role in control of the cell cycle, stress response, ribosome biogenesis and in those bacteria that undergo differentiation, in morphogenesis control. The polypeptide is GTPase Obg (Shewanella sediminis (strain HAW-EB3)).